A 518-amino-acid chain; its full sequence is D-aminopeptidase (518 aa).

Serine 62 functions as the Nucleophile in the catalytic mechanism. The active-site Proton donor/acceptor is the lysine 65. The tract at residues 373–392 is disordered; that stretch reads FGTGPEKMDISGENEAQSSM. An important for specificity region spans residues 477 to 487; it reads QRSMDAPSPGE. A substrate-binding site is contributed by aspartate 481.

This sequence belongs to the peptidase S12 family. As to quaternary structure, homodimer.

It catalyses the reaction Release of an N-terminal D-amino acid from a peptide, Xaa-|-Yaa-, in which Xaa is preferably D-Ala, D-Ser or D-Thr. D-amino acid amides and methyl esters also are hydrolyzed, as is glycine amide.. With respect to regulation, inhibited by beta-lactam compounds such as 6-aminopenicillic acid, 7-aminocephalosporanic acid, benzylpenicillin and ampicillin. Inhibited by p-chloromercuribenzoate. In terms of biological role, hydrolyzes N-terminal residues in D-amino acid-containing peptides. This Brucella melitensis biotype 2 (strain ATCC 23457) protein is D-aminopeptidase.